A 364-amino-acid chain; its full sequence is Carbamoyl phosphate synthase small chain (364 aa).

CPSase stretches follow at residues 1–167 (MKRQ…PSPG) and 1–171 (MKRQ…RGER). Residues Ser-45, Gly-219, and Gly-221 each coordinate L-glutamine. The 188-residue stretch at 171–358 (RIVLIDFGMK…LALIREFNKK (188 aa)) folds into the Glutamine amidotransferase type-1 domain. Cys-246 acts as the Nucleophile in catalysis. Residues Leu-247, Gln-250, Asn-288, Gly-290, and Tyr-291 each contribute to the L-glutamine site. Catalysis depends on residues His-331 and Glu-333.

The protein belongs to the CarA family. Composed of two chains; the small (or glutamine) chain promotes the hydrolysis of glutamine to ammonia, which is used by the large (or ammonia) chain to synthesize carbamoyl phosphate. Tetramer of heterodimers (alpha,beta)4.

It catalyses the reaction hydrogencarbonate + L-glutamine + 2 ATP + H2O = carbamoyl phosphate + L-glutamate + 2 ADP + phosphate + 2 H(+). The enzyme catalyses L-glutamine + H2O = L-glutamate + NH4(+). It functions in the pathway amino-acid biosynthesis; L-arginine biosynthesis; carbamoyl phosphate from bicarbonate: step 1/1. It participates in pyrimidine metabolism; UMP biosynthesis via de novo pathway; (S)-dihydroorotate from bicarbonate: step 1/3. Its function is as follows. Small subunit of the glutamine-dependent carbamoyl phosphate synthetase (CPSase). CPSase catalyzes the formation of carbamoyl phosphate from the ammonia moiety of glutamine, carbonate, and phosphate donated by ATP, constituting the first step of 2 biosynthetic pathways, one leading to arginine and/or urea and the other to pyrimidine nucleotides. The small subunit (glutamine amidotransferase) binds and cleaves glutamine to supply the large subunit with the substrate ammonia. The sequence is that of Carbamoyl phosphate synthase small chain from Bacillus caldolyticus.